The chain runs to 213 residues: CDP-diacylglycerol--inositol 3-phosphatidyltransferase (213 aa).

Over 1-5 the chain is Cytoplasmic; sequence MPEEN. A helical membrane pass occupies residues 6-26; the sequence is IFLFVPNLIGYARIVFAIISF. A topological domain (lumenal) is located at residue Tyr27. Residues 28–48 form a helical membrane-spanning segment; sequence FMPCCPFTASSFYLLSGLLDA. 2 residues coordinate Mg(2+): Asp47 and Asp50. At 49–73 the chain is on the cytoplasmic side; the sequence is FDGHAARALNQGTRFGAMLDMLTDR. The a CDP-1,2-diacyl-sn-glycerol site is built by Gly51, Arg55, and Thr61. Mg(2+) contacts are provided by Asp68 and Asp72. The active-site Proton acceptor is Asp72. A helical transmembrane segment spans residues 74-94; it reads CATMCLLVNLALLYPRATLLF. Position 95 (Gln95) is a topological domain, lumenal. Residues 96–116 traverse the membrane as a helical segment; the sequence is LSMSLDVASHWLHLHSSVVRG. Over 117–139 the chain is Cytoplasmic; it reads SESHKMIDLSGNPVLRIYYTSRP. Residues 140–160 form a helical membrane-spanning segment; the sequence is ALFTLCAGNELFYCLLYLFNF. Topologically, residues 161-174 are lumenal; sequence SEGPLVGSVGLFRM. A helical transmembrane segment spans residues 175–195; that stretch reads GLWITAPIALLKSIISVIHLV. The Cytoplasmic portion of the chain corresponds to 196 to 213; that stretch reads TAARNMAALDAADRAKKK.

The protein belongs to the CDP-alcohol phosphatidyltransferase class-I family. Requires Mn(2+) as cofactor. The cofactor is Mg(2+). In terms of tissue distribution, detected in liver (at protein level). Widely expressed. Highly expressed in the brain and kidney; lower levels in heart, spleen, lung, liver, skeletal muscle and testis.

The protein resides in the endoplasmic reticulum membrane. It is found in the cell membrane. The enzyme catalyses a CDP-1,2-diacyl-sn-glycerol + myo-inositol = a 1,2-diacyl-sn-glycero-3-phospho-(1D-myo-inositol) + CMP + H(+). In terms of biological role, catalyzes the biosynthesis of phosphatidylinositol (PtdIns) as well as PtdIns:inositol exchange reaction. May thus act to reduce an excessive cellular PtdIns content. The exchange activity is due to the reverse reaction of PtdIns synthase and is dependent on CMP, which is tightly bound to the enzyme. The protein is CDP-diacylglycerol--inositol 3-phosphatidyltransferase of Rattus norvegicus (Rat).